A 244-amino-acid chain; its full sequence is NAD(P)H-quinone oxidoreductase subunit K (244 aa).

[4Fe-4S] cluster contacts are provided by Cys-60, Cys-61, Cys-125, and Cys-156. The segment at 213–244 is disordered; sequence TSANSIPSSKKEKITELPDNNEKAEIIDTLEN. Positions 221-238 are enriched in basic and acidic residues; the sequence is SKKEKITELPDNNEKAEI.

Belongs to the complex I 20 kDa subunit family. NDH-1 can be composed of about 15 different subunits; different subcomplexes with different compositions have been identified which probably have different functions. Requires [4Fe-4S] cluster as cofactor.

The protein localises to the cellular thylakoid membrane. The enzyme catalyses a plastoquinone + NADH + (n+1) H(+)(in) = a plastoquinol + NAD(+) + n H(+)(out). The catalysed reaction is a plastoquinone + NADPH + (n+1) H(+)(in) = a plastoquinol + NADP(+) + n H(+)(out). Functionally, NDH-1 shuttles electrons from an unknown electron donor, via FMN and iron-sulfur (Fe-S) centers, to quinones in the respiratory and/or the photosynthetic chain. The immediate electron acceptor for the enzyme in this species is believed to be plastoquinone. Couples the redox reaction to proton translocation, and thus conserves the redox energy in a proton gradient. Cyanobacterial NDH-1 also plays a role in inorganic carbon-concentration. The protein is NAD(P)H-quinone oxidoreductase subunit K of Prochlorococcus marinus (strain MIT 9301).